We begin with the raw amino-acid sequence, 323 residues long: Sphingolipid delta(4)-desaturase DES1 (323 aa).

Transmembrane regions (helical) follow at residues 41–61 (HNLI…FYLV) and 68–88 (WLLF…TLAI). Residues 89–93 (HEISH) carry the Histidine box-1 motif. The chain crosses the membrane as a helical span at residues 104–124 (WNRCFGMFANLPLGLPYSVSF). Positions 128-132 (HMDHH) match the Histidine box-2 motif. 3 consecutive transmembrane segments (helical) span residues 152–172 (FFCT…FYTI), 185–205 (LEII…YTLG), and 210–230 (FYML…GHFI). A Histidine box-3 motif is present at residues 259 to 263 (HNEHH).

This sequence belongs to the fatty acid desaturase type 1 family. DEGS subfamily. As to quaternary structure, interacts with RLBP1; the interaction increases synthesis of chromophore-precursors by DEGS1.

Its subcellular location is the endoplasmic reticulum membrane. It carries out the reaction an N-acylsphinganine + 2 Fe(II)-[cytochrome b5] + O2 + 2 H(+) = an N-acylsphing-4-enine + 2 Fe(III)-[cytochrome b5] + 2 H2O. The catalysed reaction is all-trans-retinol = 11-cis-retinol. The enzyme catalyses all-trans-retinol = 9-cis-retinol. It catalyses the reaction all-trans-retinol = 13-cis-retinol. It carries out the reaction 11-cis-retinol = 13-cis-retinol. The catalysed reaction is 11-cis-retinol = 9-cis-retinol. Functionally, has sphingolipid-delta-4-desaturase activity. Converts D-erythro-sphinganine to D-erythro-sphingosine (E-sphing-4-enine). Catalyzes the equilibrium isomerization of retinols. In Xenopus tropicalis (Western clawed frog), this protein is Sphingolipid delta(4)-desaturase DES1 (degs1).